The following is a 278-amino-acid chain: 2-(acetamidomethylene)succinate hydrolase (278 aa).

Chloride contacts are provided by residues I41 and 106-107 (SL). S106 (nucleophile) is an active-site residue. Catalysis depends on residues D130 and H258.

It belongs to the AB hydrolase superfamily. In terms of assembly, homodimer.

It catalyses the reaction 2-(acetamidomethylene)succinate + 2 H2O + H(+) = succinate semialdehyde + acetate + NH4(+) + CO2. It functions in the pathway cofactor degradation; B6 vitamer degradation. In terms of biological role, catalyzes the final reaction in the degradation of vitamin B6 from (E)-2-(acetamidomethylene)succinate (E-2AMS) to produce succinic semialdehyde, acetate, ammonia and carbon dioxide. The sequence is that of 2-(acetamidomethylene)succinate hydrolase from Mesorhizobium japonicum (strain LMG 29417 / CECT 9101 / MAFF 303099) (Mesorhizobium loti (strain MAFF 303099)).